Here is a 402-residue protein sequence, read N- to C-terminus: Centromere protein C (402 aa).

Lysine 1 participates in a covalent cross-link: Glycyl lysine isopeptide (Lys-Gly) (interchain with G-Cter in SUMO2). A compositionally biased stretch (low complexity) spans 1–12; sequence KSEQSSFSSSSS. The segment at 1–118 is disordered; that stretch reads KSEQSSFSSS…HQKSQMSVET (118 aa). Serine 5 bears the Phosphoserine mark. Positions 25 to 42 match the Nuclear localization signal motif; the sequence is QKPPAEKTNQSSKNIGKK. Residues 44–53 show a composition bias toward basic residues; sequence APFKKQKRAN. Residues 88–118 are compositionally biased toward polar residues; it reads PNPSGDTGSSKNQDSMAAQNVHQKSQMSVET. Lysine 186 is covalently cross-linked (Glycyl lysine isopeptide (Lys-Gly) (interchain with G-Cter in SUMO2)). Threonine 193 is modified (phosphothreonine). Residues 196–218 form an MIF2 homology domain II region; sequence VRRTMRTRSKPLEYWRGERIDYQ. Serine 222 and serine 232 each carry phosphoserine. The Nuclear localization signal motif lies at 239–257; it reads KRKAKGNLGRIITTANRKR. Residue lysine 266 forms a Glycyl lysine isopeptide (Lys-Gly) (interchain with G-Cter in SUMO2) linkage. The segment at 349–402 is MIF2 homology domain III; that stretch reads LVFYVNLGYLLCTLHETPYIVTTGDSFYVPSGNYYNIKNLLNEERVLLFTQIKS.

It belongs to the CENP-C/MIF2 family. In terms of assembly, oligomer. Component of the CENPA-NAC complex, at least composed of CENPA, CENPC, CENPH, CENPM, CENPN, CENPT and CENPU. The CENPA-NAC complex interacts with the CENPA-CAD complex, composed of CENPI, CENPK, CENPL, CENPO, CENPP, CENPQ, CENPR and CENPS. Binds to DAXX. Interacts with DNMT3B. Interacts directly with CENPA. Identified in a centromere complex containing histones H2A, H2B and H4, and at least CENPA, CENPB, CENPC, CENPT, CENPN, HJURP, SUPT16H, SSRP1 and RSF1. Interacts with MEIKIN.

The protein resides in the nucleus. It is found in the chromosome. The protein localises to the centromere. It localises to the kinetochore. Functionally, component of the CENPA-NAC (nucleosome-associated) complex, a complex that plays a central role in assembly of kinetochore proteins, mitotic progression and chromosome segregation. The CENPA-NAC complex recruits the CENPA-CAD (nucleosome distal) complex and may be involved in incorporation of newly synthesized CENPA into centromeres. CENPC recruits DNA methylation and DNMT3B to both centromeric and pericentromeric satellite repeats and regulates the histone code in these regions. The polypeptide is Centromere protein C (CENPC) (Ovis aries (Sheep)).